The primary structure comprises 231 residues: Small ribosomal subunit protein uS2 (231 aa).

A disordered region spans residues 1–23; it reads MKVTNLSEKEERGGELTEAEKEE. Positions 7-23 are enriched in basic and acidic residues; it reads SEKEERGGELTEAEKEE.

It belongs to the universal ribosomal protein uS2 family.

This Saccharolobus solfataricus (strain ATCC 35092 / DSM 1617 / JCM 11322 / P2) (Sulfolobus solfataricus) protein is Small ribosomal subunit protein uS2 (rps2).